We begin with the raw amino-acid sequence, 488 residues long: Glutamyl-tRNA(Gln) amidotransferase subunit A (488 aa).

Active-site charge relay system residues include lysine 77 and serine 152. Serine 176 serves as the catalytic Acyl-ester intermediate.

This sequence belongs to the amidase family. GatA subfamily. As to quaternary structure, heterotrimer of A, B and C subunits.

It carries out the reaction L-glutamyl-tRNA(Gln) + L-glutamine + ATP + H2O = L-glutaminyl-tRNA(Gln) + L-glutamate + ADP + phosphate + H(+). Its function is as follows. Allows the formation of correctly charged Gln-tRNA(Gln) through the transamidation of misacylated Glu-tRNA(Gln) in organisms which lack glutaminyl-tRNA synthetase. The reaction takes place in the presence of glutamine and ATP through an activated gamma-phospho-Glu-tRNA(Gln). The protein is Glutamyl-tRNA(Gln) amidotransferase subunit A of Streptococcus pyogenes serotype M1.